A 356-amino-acid chain; its full sequence is sn-glycerol-3-phosphate import ATP-binding protein UgpC (356 aa).

The 232-residue stretch at Leu-4 to Ile-235 folds into the ABC transporter domain. Residue Gly-37–Ser-44 participates in ATP binding.

Belongs to the ABC transporter superfamily. sn-glycerol-3-phosphate importer (TC 3.A.1.1.3) family. As to quaternary structure, the complex is composed of two ATP-binding proteins (UgpC), two transmembrane proteins (UgpA and UgpE) and a solute-binding protein (UgpB).

It localises to the cell inner membrane. The catalysed reaction is sn-glycerol 3-phosphate(out) + ATP + H2O = sn-glycerol 3-phosphate(in) + ADP + phosphate + H(+). Part of the ABC transporter complex UgpBAEC involved in sn-glycerol-3-phosphate (G3P) import. Responsible for energy coupling to the transport system. In Escherichia coli (strain UTI89 / UPEC), this protein is sn-glycerol-3-phosphate import ATP-binding protein UgpC.